A 190-amino-acid chain; its full sequence is Recombination protein RecR (190 aa).

The C4-type zinc-finger motif lies at 58-73 (CGQCGALSENELCEIC). The Toprim domain maps to 81–167 (NILCIVESPK…TFSKIAQGIP (87 aa)).

Belongs to the RecR family.

In terms of biological role, may play a role in DNA repair. It seems to be involved in an RecBC-independent recombinational process of DNA repair. It may act with RecF and RecO. This Campylobacter jejuni subsp. jejuni serotype O:6 (strain 81116 / NCTC 11828) protein is Recombination protein RecR.